Here is a 573-residue protein sequence, read N- to C-terminus: Dilute domain-containing protein SPAC25B8.08 (573 aa).

The Dilute domain maps to 180–464; that stretch reads NAFLCEVNQV…LKKLDAFHEE (285 aa).

It is found in the cytoplasm. It localises to the golgi apparatus. This chain is Dilute domain-containing protein SPAC25B8.08, found in Schizosaccharomyces pombe (strain 972 / ATCC 24843) (Fission yeast).